A 286-amino-acid polypeptide reads, in one-letter code: MSLRDKLDAYLRLARMDRPIGTFLLLWPCLMALVLAAGGMPDLKVLIIFVIGVVVMRACGCIINDYADRKLDSHVERTKSRPLASGEVTVKEALILFVVMGLLAFGLVLMLNPLVVQLSFVGIILTIIYPFTKRFTNMPQMFLGVVWSWSIPMAYAAQLGTVPVEAWWLFAANWCWTVAYDTMYAMVDRDDDLKVGIKSTAILFGRFDRQIIGLFQLAALGCFIMAGLSADRGLVFALGILTFIGFGLYQQKLIFDRERAPCLQAFLNNNWAGMVLFVTLGADYLI.

8 helical membrane-spanning segments follow: residues 20-40, 43-63, 95-115, 116-136, 142-162, 167-187, 210-230, and 235-255; these read IGTF…AGGM, LKVL…GCII, ILFV…NPLV, VQLS…KRFT, FLGV…LGTV, WWLF…YAMV, QIIG…GLSA, and VFAL…KLIF.

This sequence belongs to the UbiA prenyltransferase family. Mg(2+) serves as cofactor.

It localises to the cell inner membrane. It catalyses the reaction all-trans-octaprenyl diphosphate + 4-hydroxybenzoate = 4-hydroxy-3-(all-trans-octaprenyl)benzoate + diphosphate. The protein operates within cofactor biosynthesis; ubiquinone biosynthesis. Its function is as follows. Catalyzes the prenylation of para-hydroxybenzoate (PHB) with an all-trans polyprenyl group. Mediates the second step in the final reaction sequence of ubiquinone-8 (UQ-8) biosynthesis, which is the condensation of the polyisoprenoid side chain with PHB, generating the first membrane-bound Q intermediate 3-octaprenyl-4-hydroxybenzoate. This Shewanella loihica (strain ATCC BAA-1088 / PV-4) protein is 4-hydroxybenzoate octaprenyltransferase.